The primary structure comprises 323 residues: Beta-ketoacyl-[acyl-carrier-protein] synthase III (323 aa).

Active-site residues include cysteine 112 and histidine 249. The segment at glutamine 250–arginine 254 is ACP-binding. Asparagine 279 is a catalytic residue.

This sequence belongs to the thiolase-like superfamily. FabH family. Homodimer.

Its subcellular location is the cytoplasm. The enzyme catalyses malonyl-[ACP] + acetyl-CoA + H(+) = 3-oxobutanoyl-[ACP] + CO2 + CoA. It functions in the pathway lipid metabolism; fatty acid biosynthesis. Its function is as follows. Catalyzes the condensation reaction of fatty acid synthesis by the addition to an acyl acceptor of two carbons from malonyl-ACP. Catalyzes the first condensation reaction which initiates fatty acid synthesis and may therefore play a role in governing the total rate of fatty acid production. Possesses both acetoacetyl-ACP synthase and acetyl transacylase activities. Its substrate specificity determines the biosynthesis of branched-chain and/or straight-chain of fatty acids. This Clostridium kluyveri (strain NBRC 12016) protein is Beta-ketoacyl-[acyl-carrier-protein] synthase III.